We begin with the raw amino-acid sequence, 175 residues long: Probable chemoreceptor glutamine deamidase CheD (175 aa).

The protein belongs to the CheD family.

The enzyme catalyses L-glutaminyl-[protein] + H2O = L-glutamyl-[protein] + NH4(+). In terms of biological role, probably deamidates glutamine residues to glutamate on methyl-accepting chemotaxis receptors (MCPs), playing an important role in chemotaxis. The protein is Probable chemoreceptor glutamine deamidase CheD of Jannaschia sp. (strain CCS1).